Reading from the N-terminus, the 209-residue chain is dITP/XTP pyrophosphatase (209 aa).

22–27 lines the substrate pocket; sequence SHNQGK. D83 serves as the catalytic Proton acceptor. D83 contacts Mg(2+). Residues S84, 167 to 170, K190, and 195 to 196 contribute to the substrate site; these read FGYD and HR.

The protein belongs to the HAM1 NTPase family. As to quaternary structure, homodimer. The cofactor is Mg(2+).

It carries out the reaction XTP + H2O = XMP + diphosphate + H(+). The enzyme catalyses dITP + H2O = dIMP + diphosphate + H(+). The catalysed reaction is ITP + H2O = IMP + diphosphate + H(+). Pyrophosphatase that catalyzes the hydrolysis of nucleoside triphosphates to their monophosphate derivatives, with a high preference for the non-canonical purine nucleotides XTP (xanthosine triphosphate), dITP (deoxyinosine triphosphate) and ITP. Seems to function as a house-cleaning enzyme that removes non-canonical purine nucleotides from the nucleotide pool, thus preventing their incorporation into DNA/RNA and avoiding chromosomal lesions. The sequence is that of dITP/XTP pyrophosphatase from Zymomonas mobilis subsp. mobilis (strain ATCC 31821 / ZM4 / CP4).